The sequence spans 687 residues: Light-independent protochlorophyllide reductase subunit B (687 aa).

Residue Asp36 coordinates [4Fe-4S] cluster. The Proton donor role is filled by Asp441. Substrate is bound at residue 576 to 577 (GM).

The protein belongs to the ChlB/BchB/BchZ family. As to quaternary structure, protochlorophyllide reductase is composed of three subunits; ChlL, ChlN and ChlB. Forms a heterotetramer of two ChlB and two ChlN subunits. [4Fe-4S] cluster serves as cofactor.

It is found in the plastid. Its subcellular location is the chloroplast. It catalyses the reaction chlorophyllide a + oxidized 2[4Fe-4S]-[ferredoxin] + 2 ADP + 2 phosphate = protochlorophyllide a + reduced 2[4Fe-4S]-[ferredoxin] + 2 ATP + 2 H2O. It participates in porphyrin-containing compound metabolism; chlorophyll biosynthesis (light-independent). In terms of biological role, component of the dark-operative protochlorophyllide reductase (DPOR) that uses Mg-ATP and reduced ferredoxin to reduce ring D of protochlorophyllide (Pchlide) to form chlorophyllide a (Chlide). This reaction is light-independent. The NB-protein (ChlN-ChlB) is the catalytic component of the complex. In Chlamydomonas reinhardtii (Chlamydomonas smithii), this protein is Light-independent protochlorophyllide reductase subunit B.